Consider the following 224-residue polypeptide: ATP synthase subunit a (224 aa).

The next 6 membrane-spanning stretches (helical) occupy residues 17 to 37 (LSLN…IYWL), 72 to 92 (IFIS…FPYI), 99 to 119 (LTLT…YGWI), 125 to 145 (MFAH…MVCI), 170 to 190 (LLLT…VTFL), and 195 to 215 (IALL…FAVL).

It belongs to the ATPase A chain family. As to quaternary structure, F-type ATPases have 2 components, CF(1) - the catalytic core - and CF(0) - the membrane proton channel. CF(1) has five subunits: alpha(3), beta(3), gamma(1), delta(1), epsilon(1). CF(0) has three main subunits: a, b and c.

The protein resides in the mitochondrion inner membrane. In terms of biological role, mitochondrial membrane ATP synthase (F(1)F(0) ATP synthase or Complex V) produces ATP from ADP in the presence of a proton gradient across the membrane which is generated by electron transport complexes of the respiratory chain. F-type ATPases consist of two structural domains, F(1) - containing the extramembraneous catalytic core and F(0) - containing the membrane proton channel, linked together by a central stalk and a peripheral stalk. During catalysis, ATP synthesis in the catalytic domain of F(1) is coupled via a rotary mechanism of the central stalk subunits to proton translocation. Key component of the proton channel; it may play a direct role in the translocation of protons across the membrane. The polypeptide is ATP synthase subunit a (mt:ATPase6) (Drosophila simulans (Fruit fly)).